A 401-amino-acid chain; its full sequence is Beta-ketoadipyl-CoA thiolase (401 aa).

Cys-90 acts as the Acyl-thioester intermediate in catalysis. Catalysis depends on proton acceptor residues His-357 and Cys-387.

The protein belongs to the thiolase-like superfamily. Thiolase family.

The catalysed reaction is succinyl-CoA + acetyl-CoA = 3-oxoadipyl-CoA + CoA. It functions in the pathway aromatic compound metabolism; beta-ketoadipate pathway; acetyl-CoA and succinyl-CoA from 3-oxoadipate: step 2/2. Functionally, catalyzes thiolytic cleavage of beta-ketoadipyl-CoA to succinyl-CoA and acetyl-CoA. This Acinetobacter baylyi (strain ATCC 33305 / BD413 / ADP1) protein is Beta-ketoadipyl-CoA thiolase (catF).